The primary structure comprises 1412 residues: Probable phosphatidylinositol 4-kinase STT4 homolog (1412 aa).

One can recognise a PIK helical domain in the interval 878-1055 (SMETNGFYRF…GTFVRCIEEI (178 aa)). A pleckstrin homology (PH) domain conferring phosphoinositide binding specificity region spans residues 1056–1163 (MKEMPDGSRD…ISIKQLIFKS (108 aa)). Residues 1127-1396 (NGSARALQSH…LIAESSQKFR (270 aa)) form the PI3K/PI4K catalytic domain. Residues 1133–1139 (LQSHSKV) form a G-loop region. The segment at 1266-1274 (NIKDRHNGN) is catalytic loop. The tract at residues 1285-1308 (HIDFGYMLEMSPGNLNIEAPLKLT) is activation loop.

The protein belongs to the PI3/PI4-kinase family. Type III PI4K subfamily.

Its subcellular location is the cytoplasm. It carries out the reaction a 1,2-diacyl-sn-glycero-3-phospho-(1D-myo-inositol) + ATP = a 1,2-diacyl-sn-glycero-3-phospho-(1D-myo-inositol 4-phosphate) + ADP + H(+). In terms of biological role, acts on phosphatidylinositol (PI) in the first committed step in the production of the second messenger inositol 1,4,5,-trisphosphate. This is Probable phosphatidylinositol 4-kinase STT4 homolog (STT4) from Encephalitozoon cuniculi (strain GB-M1) (Microsporidian parasite).